We begin with the raw amino-acid sequence, 347 residues long: Inosamine-phosphate amidinotransferase 1 (347 aa).

Active-site residues include Asp-179 and His-227. Cys-332 (amidino-cysteine intermediate) is an active-site residue.

It belongs to the amidinotransferase family. As to quaternary structure, homodimer.

It carries out the reaction 1-amino-1-deoxy-scyllo-inositol 4-phosphate + L-arginine = 1-guanidino-1-deoxy-scyllo-inositol 4-phosphate + L-ornithine. Its pathway is antibiotic biosynthesis; streptomycin biosynthesis. Its function is as follows. Catalyzes two non-consecutive transamidination reactions. It converts scyllo-inosamine 4-phosphate into N-amidino-scyllo-inosamine 4-phosphate and N1-amidinostreptamine 6-phosphate into streptidine 6-phosphate. This is Inosamine-phosphate amidinotransferase 1 (strB1) from Streptomyces griseus.